Here is a 265-residue protein sequence, read N- to C-terminus: Type 1 encapsulin shell protein (265 aa).

This sequence belongs to the encapsulin family. Family 1 subfamily. Multimeric. The encapsulin nanocompartment is formed by 60 subunits. Monomers form pentamers which assemble to form shells. There are 12 pores where the pentamers meet as well as 3-fold axis channels and dimer channels; none are larger than 3-4 Angstroms in diameter. The N-terminus of the protein is inside the shell, the C-terminus is outside. In terms of processing, the initiator methionine is partially removed. When isolated from culture filtrate isoelectric focusing gives 3 bands, none of which are glycosylated.

It localises to the encapsulin nanocompartment. The protein localises to the secreted. Its subcellular location is the cell membrane. Functionally, shell component of a type 1 encapsulin nanocompartment in situ; its cargo protects against oxidative stress at low pH. In situ and in E.coli assembles into proteinaceous shells about 22 nm in diameter with 2.5 nm thick walls. Cargo proteins are targeted to the interior via their C-terminal extensions; empty intact shells can be isolated in E.coli in the absence of cargo protein. There are at least 4 possible cargo proteins, DyP (encoded in the same locus), FolB, BfrB and Rv1762c; DyP and Rv1762c have been identified in vivo. Probably involved in protection against oxidative damage from the host immune response. A T-cell antigen found in bacterial culture cell filtrates, stimulates mouse immune response. Does not have detectable bacteriocin activity. This chain is Type 1 encapsulin shell protein, found in Mycobacterium tuberculosis (strain ATCC 25618 / H37Rv).